Here is a 699-residue protein sequence, read N- to C-terminus: Elongation factor G (699 aa).

A tr-type G domain is found at 8–290 (NKYRNLGIMA…KVIELLPSPV (283 aa)). Residues 17–24 (AHIDAGKT), 88–92 (DTPGH), and 142–145 (NKMD) each bind GTP.

The protein belongs to the TRAFAC class translation factor GTPase superfamily. Classic translation factor GTPase family. EF-G/EF-2 subfamily.

It is found in the cytoplasm. Its function is as follows. Catalyzes the GTP-dependent ribosomal translocation step during translation elongation. During this step, the ribosome changes from the pre-translocational (PRE) to the post-translocational (POST) state as the newly formed A-site-bound peptidyl-tRNA and P-site-bound deacylated tRNA move to the P and E sites, respectively. Catalyzes the coordinated movement of the two tRNA molecules, the mRNA and conformational changes in the ribosome. In Dichelobacter nodosus (strain VCS1703A), this protein is Elongation factor G.